The chain runs to 810 residues: Oligoxyloglucan-reducing end-specific xyloglucanase (810 aa).

The N-terminal stretch at 1 to 28 (MRAKNGPGSWLALTAIATSLNTLALAAA) is a signal peptide. Asn-32 carries N-linked (GlcNAc...) asparagine glycosylation. Residue Asp-66 is the Nucleophile of the active site. Residues 126-135 (FVSQDRGATF) form a BNR 1 repeat. Asn-188 is a glycosylation site (N-linked (GlcNAc...) asparagine). One copy of the BNR 2 repeat lies at 226–236 (YVTRDSGESWE). N-linked (GlcNAc...) asparagine glycans are attached at residues Asn-298, Asn-312, and Asn-321. The stretch at 359 to 369 (YLSHDGGKSWK) is one BNR 3 repeat. N-linked (GlcNAc...) asparagine glycosylation is present at Asn-455. The active-site Proton donor is Asp-498. Asn-544 carries an N-linked (GlcNAc...) asparagine glycan. Residues 554-564 (YSADGGSSWTK) form a BNR 4 repeat. Residues Asn-573 and Asn-612 are each glycosylated (N-linked (GlcNAc...) asparagine). The stretch at 617–626 (YVTTDLGQTW) is one BNR 5 repeat. Asn-638 carries N-linked (GlcNAc...) asparagine glycosylation. 3 BNR repeats span residues 658–667 (YLSRDGGLSY), 705–716 (YHTRNFGKKWTK), and 759–769 (YRSDDNGKTWV).

This sequence belongs to the glycosyl hydrolase 74 family.

Its subcellular location is the secreted. It catalyses the reaction Hydrolysis of cellobiose from the reducing end of xyloglucans consisting of a beta-(1-&gt;4)-linked glucan carrying alpha-D-xylosyl groups on O-6 of the glucose residues. To be a substrate, the first residue must be unsubstituted, the second residue may bear a xylosyl group, whether further glycosylated or not, and the third residue, which becomes the new terminus by the action of the enzyme, is preferably xylosylated, but this xylose residue must not be further substituted.. Its function is as follows. Oligoxyloglucan-reducing end-specific xyloglucanase involved in degradation of xyloglucans. Releases the first two glycosyl segments from oligoxyloglucans. Active against cotton xyloglucan, tamarind xyloglucan and tamarind xyloglucan oligomers. The polypeptide is Oligoxyloglucan-reducing end-specific xyloglucanase (xgcA) (Emericella nidulans (strain FGSC A4 / ATCC 38163 / CBS 112.46 / NRRL 194 / M139) (Aspergillus nidulans)).